An 86-amino-acid polypeptide reads, in one-letter code: Neurotoxin-like protein pMD18-NTL1/2/4/5 (86 aa).

A signal peptide spans 1–21; sequence MKTLLLTLVVLTIACLDLGYT. 4 cysteine pairs are disulfide-bonded: C24–C45, C38–C62, C66–C78, and C79–C84.

This sequence belongs to the three-finger toxin family. Short-chain subfamily. Orphan group IX sub-subfamily. As to expression, expressed by the venom gland.

The protein resides in the secreted. This is Neurotoxin-like protein pMD18-NTL1/2/4/5 from Bungarus multicinctus (Many-banded krait).